Consider the following 461-residue polypeptide: UDP-N-acetylmuramate--L-alanine ligase (461 aa).

ATP is bound at residue 112 to 118 (GTHGKTT).

It belongs to the MurCDEF family.

It localises to the cytoplasm. The enzyme catalyses UDP-N-acetyl-alpha-D-muramate + L-alanine + ATP = UDP-N-acetyl-alpha-D-muramoyl-L-alanine + ADP + phosphate + H(+). Its pathway is cell wall biogenesis; peptidoglycan biosynthesis. In terms of biological role, cell wall formation. The protein is UDP-N-acetylmuramate--L-alanine ligase of Hydrogenovibrio crunogenus (strain DSM 25203 / XCL-2) (Thiomicrospira crunogena).